Consider the following 67-residue polypeptide: Phycobilisome 7.8 kDa linker polypeptide, allophycocyanin-associated, core (67 aa).

One can recognise a CpcD-like domain in the interval 1–56; sequence MRMFRITACVPSQTRIRTQRELQNTYFTKLVPYDNSFREQQRIMKMGGKIVKVELA.

Belongs to the phycobilisome linker protein family.

The protein localises to the cellular thylakoid membrane. Functionally, rod linker protein, associated with allophycocyanin. Linker polypeptides determine the state of aggregation and the location of the disk-shaped phycobiliprotein units within the phycobilisome and modulate their spectroscopic properties in order to mediate a directed and optimal energy transfer. The chain is Phycobilisome 7.8 kDa linker polypeptide, allophycocyanin-associated, core (apcC) from Synechocystis sp. (strain ATCC 27184 / PCC 6803 / Kazusa).